Reading from the N-terminus, the 819-residue chain is DNA topoisomerase 4 subunit A (819 aa).

The Topo IIA-type catalytic domain occupies 30–496; the sequence is LPDIRDGLKP…QIIEIDTASL (467 aa). Tyr118 acts as the O-(5'-phospho-DNA)-tyrosine intermediate in catalysis.

Belongs to the type II topoisomerase GyrA/ParC subunit family. ParC type 2 subfamily. Heterotetramer composed of ParC and ParE.

The protein localises to the cell membrane. It catalyses the reaction ATP-dependent breakage, passage and rejoining of double-stranded DNA.. Topoisomerase IV is essential for chromosome segregation. It relaxes supercoiled DNA. Performs the decatenation events required during the replication of a circular DNA molecule. This chain is DNA topoisomerase 4 subunit A, found in Streptococcus pyogenes serotype M1.